A 569-amino-acid chain; its full sequence is Glucose-6-phosphate isomerase, cytosolic 1A (569 aa).

Residue Glu360 is the Proton donor of the active site. Residues His391 and Lys516 contribute to the active site.

It belongs to the GPI family. As to quaternary structure, homodimer.

The protein resides in the cytoplasm. The catalysed reaction is alpha-D-glucose 6-phosphate = beta-D-fructose 6-phosphate. Its pathway is carbohydrate degradation; glycolysis; D-glyceraldehyde 3-phosphate and glycerone phosphate from D-glucose: step 2/4. The polypeptide is Glucose-6-phosphate isomerase, cytosolic 1A (PGIC1-A) (Clarkia lewisii (Farewell-to-spring)).